Consider the following 529-residue polypeptide: Zinc finger protein 572 (529 aa).

The disordered stretch occupies residues 1 to 125 (MEQEQKLLVS…TGPAGQQNPS (125 aa)). Residue lysine 6 forms a Glycyl lysine isopeptide (Lys-Gly) (interchain with G-Cter in SUMO2) linkage. Polar residues predominate over residues 22-42 (KNTITGDESKNNLKTVQFSNS). Residues 43-68 (KADKERASKWSRSDGPENYKDEDTKE) are compositionally biased toward basic and acidic residues. Polar residues predominate over residues 87-96 (NDSNLGSQRN). 12 C2H2-type zinc fingers span residues 131 to 153 (YKCSECWKSFSNSSHLRIHQRTH), 159 to 181 (YRCSECGKCFSNSSHLIQHLRTH), 187 to 209 (YQCGECGKSFSNTSHLIIHERTH), 215 to 237 (YKCPECAKSLSSSSHLIQHHRSH), 243 to 265 (YECPLCGKCFSHSYVLVEHQRTH), 271 to 293 (YKCPDCGKSFSQSSSLIRHQRTH), 299 to 321 (YKCPECGKGFGCNSTLIKHQRIH), 327 to 349 (YQCIECGKNFSRSSNLVTHQKMH), 383 to 405 (YKCCECGKSFGLSSHLIRHQRTH), 411 to 433 (YRCSECWKTFSQSSTLVIHQRTH), 439 to 461 (YKCPDCGECFSQSFNLIRHRRTH), and 467 to 489 (YKCTDCEKCFSRSAYLSQHRKIH).

The protein belongs to the krueppel C2H2-type zinc-finger protein family.

It is found in the nucleus. Its function is as follows. May be involved in transcriptional regulation. The chain is Zinc finger protein 572 (ZNF572) from Bos taurus (Bovine).